A 524-amino-acid chain; its full sequence is GMP synthase [glutamine-hydrolyzing] (524 aa).

The Glutamine amidotransferase type-1 domain occupies 5 to 195; the sequence is KVIVIDFGGQ…VRGVCGCAGT (191 aa). Residue cysteine 82 is the Nucleophile of the active site. Active-site residues include histidine 169 and glutamate 171. One can recognise a GMPS ATP-PPase domain in the interval 196 to 389; sequence WKMDSFVKNT…LGLPDYLVFR (194 aa). An ATP-binding site is contributed by 223–229; sequence SGGVDSS.

In terms of assembly, homodimer.

The catalysed reaction is XMP + L-glutamine + ATP + H2O = GMP + L-glutamate + AMP + diphosphate + 2 H(+). It functions in the pathway purine metabolism; GMP biosynthesis; GMP from XMP (L-Gln route): step 1/1. Its function is as follows. Catalyzes the synthesis of GMP from XMP. The chain is GMP synthase [glutamine-hydrolyzing] from Agathobacter rectalis (strain ATCC 33656 / DSM 3377 / JCM 17463 / KCTC 5835 / VPI 0990) (Eubacterium rectale).